The sequence spans 243 residues: Terpene cyclase penB (243 aa).

The next 3 helical transmembrane spans lie at 19–39 (IANI…VGMI), 48–68 (YGMA…YSLI), and 78–98 (GVFI…IKFA). Asn-111 is a glycosylation site (N-linked (GlcNAc...) asparagine). Transmembrane regions (helical) follow at residues 112–132 (LSLI…ALAA), 137–157 (SLAY…GGLC), 172–194 (LWLS…WMYW), and 205–225 (LVLW…LCYW).

This sequence belongs to the paxB family.

Its subcellular location is the membrane. Its pathway is secondary metabolite biosynthesis. Functionally, terpene cyclase; part of the gene cluster that mediates the biosynthesis of the indole diterpenes penitrems. The geranylgeranyl diphosphate (GGPP) synthase penG catalyzes the first step in penitrem biosynthesis via conversion of farnesyl pyrophosphate and isopentyl pyrophosphate into geranylgeranyl pyrophosphate (GGPP). Condensation of indole-3-glycerol phosphate with GGPP by the prenyl transferase penC then forms 3-geranylgeranylindole (3-GGI). Epoxidation by the FAD-dependent monooxygenase penM leads to a epoxidized-GGI that is substrate of the terpene cyclase penB for cyclization to yield paspaline. Paspaline is subsequently converted to 13-desoxypaxilline by the cytochrome P450 monooxygenase penP, the latter being then converted to paxilline by the cytochrome P450 monooxygenase penQ. Paxilline is converted to beta-paxitriol via C-10 ketoreduction by the short-chain dehydrogenase PC-15 which can be monoprenylated at the C-20 by the indole diterpene prenyltransferase penD. A two-step elimination (acetylation and elimination) process performed by the O-acetyltransferase PC-16 and the P.simplicissimum ptmI-ortholog not yet identified in P.crustosum, leads to the production of the prenylated form of penijanthine. The FAD-linked oxidoreductase ptmO then converts the prenylated form of penijanthine into PC-M5 which is in turn transformed into PC-M4 by the aromatic dimethylallyltransferase PC-22. A series of oxidation steps involving 4 cytochrome P450 monooxygenases (PC-21, PC-05, PC-23, PC-20) and a FAD-dependent monooxygenase (PC-14) are required for the transformation of PC-M4 to penitrems A and E. Synthesis of these final products is proposed to proceed via penitrems D and C (PC-21, PC-05, PC-14) and penitrems B and F (PC-21, PC-05, PC-14, PC-23). The sequence is that of Terpene cyclase penB (penB) from Penicillium crustosum (Blue mold fungus).